Here is a 231-residue protein sequence, read N- to C-terminus: Large ribosomal subunit protein uL1 (231 aa).

It belongs to the universal ribosomal protein uL1 family. As to quaternary structure, part of the 50S ribosomal subunit.

In terms of biological role, binds directly to 23S rRNA. The L1 stalk is quite mobile in the ribosome, and is involved in E site tRNA release. Functionally, protein L1 is also a translational repressor protein, it controls the translation of the L11 operon by binding to its mRNA. This chain is Large ribosomal subunit protein uL1, found in Alkalilimnicola ehrlichii (strain ATCC BAA-1101 / DSM 17681 / MLHE-1).